A 354-amino-acid chain; its full sequence is Transcription factor ATOH1 (354 aa).

Basic and acidic residues predominate over residues 1–21 (MSRLLHAEEWAEVKELGDHHR). 2 disordered regions span residues 1-55 (MSRL…ELSL) and 91-122 (EAAA…PGPV). Residues 26-38 (HHLPQPPPPPQPP) show a composition bias toward pro residues. Residues 94–107 (APRDEVDGRGELVR) show a composition bias toward basic and acidic residues. Residues 108–122 (RSSGGASSSKSPGPV) are compositionally biased toward low complexity. Residues 159–211 (QRRLAANARERRRMHGLNHAFDQLRNVIPSFNNDKKLSKYETLQMAQIYINAL) enclose the bHLH domain. Disordered stretches follow at residues 216–277 (QTPS…TRFS) and 312–354 (SPSL…DEAS). Residues 250-264 (NATAAGAQQASGGSQ) are compositionally biased toward low complexity. Residues 335-354 (HRSDGEFSPHSHYSDSDEAS) show a composition bias toward basic and acidic residues.

As to quaternary structure, efficient DNA binding requires dimerization with another bHLH protein.

It localises to the nucleus. Transcriptional regulator. Activates E box-dependent transcription in collaboration with TCF3/E47, but the activity is completely antagonized by the negative regulator of neurogenesis HES1. Plays a role in the differentiation of subsets of neural cells by activating E box-dependent transcription. This Homo sapiens (Human) protein is Transcription factor ATOH1.